An 89-amino-acid polypeptide reads, in one-letter code: Small ribosomal subunit protein uS15 (89 aa).

Positions 1 to 25 (MSLDTTEKQQLINTHQTHGTDTGSA) are disordered. A compositionally biased stretch (polar residues) spans 8–25 (KQQLINTHQTHGTDTGSA).

This sequence belongs to the universal ribosomal protein uS15 family. Part of the 30S ribosomal subunit. Forms a bridge to the 50S subunit in the 70S ribosome, contacting the 23S rRNA.

Its function is as follows. One of the primary rRNA binding proteins, it binds directly to 16S rRNA where it helps nucleate assembly of the platform of the 30S subunit by binding and bridging several RNA helices of the 16S rRNA. In terms of biological role, forms an intersubunit bridge (bridge B4) with the 23S rRNA of the 50S subunit in the ribosome. This is Small ribosomal subunit protein uS15 from Synechococcus sp. (strain CC9902).